The following is a 50-amino-acid chain: Ribosome-inactivating protein lyophyllin (50 aa).

The catalysed reaction is Endohydrolysis of the N-glycosidic bond at one specific adenosine on the 28S rRNA.. Functionally, N-glycosylase that inhibits protein synthesis by depurinating ribosomal rRNA, and thus acts as a ribosomal inactivating protein (RIP). Has adenine polynucleotide glycosidase activity on the poly(A) substrate A30-ssDNA. Inhibits cell-free translation in rabbit reticulocyte lysate system with an IC(50) of 1 nM. May function in the defense response to pathogens. Displays antifungal activity against C.comatus and P.piricola, but not against R.solani, M.arachidicola and C.gossypii. Inhibits mycelial growth in P.piricola with an IC(50) of 2.5 uM. Has cytotoxic activity against the human cancer cell lines Hela, HepG2, and JAR, with IC(50) of 358.8, 489.8, and 926.9 nM respectively. It also inhibits HIV-1 reverse transcriptase activity (IC(50)=7.9 nM) and disrupts mouse embryonic development. The sequence is that of Ribosome-inactivating protein lyophyllin from Lyophyllum shimeji (Hon-shimeji).